We begin with the raw amino-acid sequence, 433 residues long: Homoserine dehydrogenase (433 aa).

NADPH-binding residues include Thr-13 and Val-14. NAD(+) contacts are provided by Val-14 and Val-33. Val-14 provides a ligand contact to NADP(+). Residues Lys-45 and Lys-105 each contribute to the NADPH site. Positions 45 and 105 each coordinate NADP(+). Residues Glu-129, Val-132, Gly-134, and Ile-136 each coordinate Na(+). Residues Gly-187 and Glu-190 each coordinate NADP(+). The L-homoserine site is built by Glu-190 and Asp-201. Lys-205 acts as the Proton donor in catalysis. Gly-302 contacts NADPH. NAD(+) is bound at residue Gly-302. Gly-302 is a binding site for NADP(+). Positions 350 to 426 (FLRIHVKDEV…VVQEVKSTYR (77 aa)) constitute an ACT domain.

It belongs to the homoserine dehydrogenase family. As to quaternary structure, homotetramer. A metal cation is required as a cofactor.

The protein resides in the cytoplasm. It localises to the secreted. The enzyme catalyses L-homoserine + NADP(+) = L-aspartate 4-semialdehyde + NADPH + H(+). Its pathway is amino-acid biosynthesis; L-methionine biosynthesis via de novo pathway; L-homoserine from L-aspartate: step 3/3. It participates in amino-acid biosynthesis; L-threonine biosynthesis; L-threonine from L-aspartate: step 3/5. Feedback inhibition by threonine. Activated by sodium ions. Catalyzes the conversion of L-aspartate-beta-semialdehyde (L-Asa) to L-homoserine (L-Hse), the third step in the biosynthesis of threonine and methionine from aspartate. Utilizes NADPH but not NADH as coenzyme. The polypeptide is Homoserine dehydrogenase (hom) (Bacillus subtilis (strain 168)).